Reading from the N-terminus, the 724-residue chain is Protein BCH1 (724 aa).

Positions 51–65 are enriched in low complexity; sequence TTATASANDNGATSN. A disordered region spans residues 51–71; it reads TTATASANDNGATSNINGQDP. The CHS5-binding stretch occupies residues 711–724; the sequence is LNFLKNFTNDTFDN.

Belongs to the CHAPS family. Component of the CHS5/6 complex composed of the 4 CHAPS proteins BCH1, BCH2, BUD7, and CHS6 as well as at least CHS5 and GTP-bound ARF1. The complex interacts with the cargo protein CHS3.

It is found in the golgi apparatus. The protein resides in the trans-Golgi network membrane. Functionally, member of the CHS5-ARF1P-binding proteins (CHAPS) which mediates export of specific cargo proteins, including chitin synthase CHS3. The protein is Protein BCH1 (BCH1) of Saccharomyces cerevisiae (strain ATCC 204508 / S288c) (Baker's yeast).